Reading from the N-terminus, the 557-residue chain is Formate--tetrahydrofolate ligase (557 aa).

66–73 lines the ATP pocket; the sequence is TPAGEGKT.

This sequence belongs to the formate--tetrahydrofolate ligase family.

The catalysed reaction is (6S)-5,6,7,8-tetrahydrofolate + formate + ATP = (6R)-10-formyltetrahydrofolate + ADP + phosphate. It functions in the pathway one-carbon metabolism; tetrahydrofolate interconversion. The protein is Formate--tetrahydrofolate ligase of Bartonella tribocorum (strain CIP 105476 / IBS 506).